The following is a 366-amino-acid chain: Probable glucuronokinase 2 (366 aa).

ATP is bound at residue 126–136; it reads PRQTGLSGSSA. Asp-179 serves as the catalytic Proton acceptor.

The protein belongs to the GHMP kinase family. Mg(2+) serves as cofactor. Requires Mn(2+) as cofactor. The cofactor is Co(2+).

The enzyme catalyses D-glucuronate + ATP = 1-phospho-alpha-D-glucuronate + ADP + H(+). In terms of biological role, sugar-1-kinase with a strict substrate specificity for D-glucuronic acid and ATP. Involved in the biosynthesis of UDP-glucuronic acid (UDP-GlcA), providing nucleotide sugars for cell-wall polymers. May be also involved in a salvage pathway for glucuronic acid. The polypeptide is Probable glucuronokinase 2 (GLCAK2) (Arabidopsis thaliana (Mouse-ear cress)).